The chain runs to 418 residues: Histidinol dehydrogenase (418 aa).

The NAD(+) site is built by Tyr-119, Gln-180, and Asn-203. 3 residues coordinate substrate: Thr-226, Gln-248, and His-251. Positions 248 and 251 each coordinate Zn(2+). Residues Glu-316 and His-317 each act as proton acceptor in the active site. Residues His-317, Asp-350, Glu-404, and His-409 each coordinate substrate. Asp-350 lines the Zn(2+) pocket. His-409 lines the Zn(2+) pocket.

Belongs to the histidinol dehydrogenase family. Zn(2+) is required as a cofactor.

It carries out the reaction L-histidinol + 2 NAD(+) + H2O = L-histidine + 2 NADH + 3 H(+). It participates in amino-acid biosynthesis; L-histidine biosynthesis; L-histidine from 5-phospho-alpha-D-ribose 1-diphosphate: step 9/9. In terms of biological role, catalyzes the sequential NAD-dependent oxidations of L-histidinol to L-histidinaldehyde and then to L-histidine. The chain is Histidinol dehydrogenase from Staphylococcus aureus (strain MRSA252).